We begin with the raw amino-acid sequence, 166 residues long: PTS system glucose-specific EIIA component (166 aa).

In terms of domain architecture, PTS EIIA type-1 spans 34-138 (DPVFAQKMMG…SIISPIIITN (105 aa)). 2 residues coordinate Zn(2+): H71 and H86. The active-site Tele-phosphohistidine intermediate; for EIIA activity is H86. H86 carries the post-translational modification Phosphohistidine; by HPr.

Heterodimer with glycerol kinase (glpk). Zn(2+) is required as a cofactor.

The protein resides in the cytoplasm. The phosphoenolpyruvate-dependent sugar phosphotransferase system (sugar PTS), a major carbohydrate active transport system, catalyzes the phosphorylation of incoming sugar substrates concomitantly with their translocation across the cell membrane. The enzyme II complex composed of PtsG and Crr is involved in glucose transport. In Staphylococcus epidermidis (strain ATCC 35984 / DSM 28319 / BCRC 17069 / CCUG 31568 / BM 3577 / RP62A), this protein is PTS system glucose-specific EIIA component (crr).